The primary structure comprises 191 residues: Protein LURP-one-related 6 (191 aa).

It belongs to the LOR family.

Might be related to the phospholipid scramblase and tubby-like superfamily of membrane tethered transcription factors. The sequence is that of Protein LURP-one-related 6 from Arabidopsis thaliana (Mouse-ear cress).